The sequence spans 1789 residues: Mediator of RNA polymerase II transcription subunit 12 (1789 aa).

4 disordered regions span residues Met1 to Gly138, Ser156 to Ala288, Ile1592 to Ala1656, and Thr1707 to Arg1727. Composition is skewed to low complexity over residues Ser25–Gln66 and Thr81–Asn98. Residues Gln107–Ala124 are compositionally biased toward polar residues. Basic and acidic residues predominate over residues Ala220–Gln229. Low complexity-rich tracts occupy residues Arg271 to Ala288, Ile1592 to Ser1628, Gln1647 to Ala1656, and Thr1707 to Asn1716.

Belongs to the Mediator complex subunit 12 family. As to quaternary structure, component of the srb8-11 complex, which itself associates with the Mediator complex.

The protein resides in the nucleus. Component of the srb8-11 complex. The srb8-11 complex is a regulatory module of the Mediator complex which is itself involved in regulation of basal and activated RNA polymerase II-dependent transcription. The srb8-11 complex may be involved in the transcriptional repression of a subset of genes regulated by Mediator. It may inhibit the association of the Mediator complex with RNA polymerase II to form the holoenzyme complex. The protein is Mediator of RNA polymerase II transcription subunit 12 (srb8) of Neurospora crassa (strain ATCC 24698 / 74-OR23-1A / CBS 708.71 / DSM 1257 / FGSC 987).